The sequence spans 218 residues: tRNA (guanine-N(7)-)-methyltransferase (218 aa).

S-adenosyl-L-methionine contacts are provided by E46, E71, D98, and D120. D120 is a catalytic residue. Residue K124 participates in substrate binding. The interval 126–131 (RHEKRR) is interaction with RNA. Substrate is bound by residues D156 and 196–199 (TEYE).

The protein belongs to the class I-like SAM-binding methyltransferase superfamily. TrmB family.

It carries out the reaction guanosine(46) in tRNA + S-adenosyl-L-methionine = N(7)-methylguanosine(46) in tRNA + S-adenosyl-L-homocysteine. Its pathway is tRNA modification; N(7)-methylguanine-tRNA biosynthesis. Functionally, catalyzes the formation of N(7)-methylguanine at position 46 (m7G46) in tRNA. The sequence is that of tRNA (guanine-N(7)-)-methyltransferase from Lactobacillus johnsonii (strain CNCM I-12250 / La1 / NCC 533).